Consider the following 118-residue polypeptide: Large ribosomal subunit protein bL20 (118 aa).

It belongs to the bacterial ribosomal protein bL20 family.

Its function is as follows. Binds directly to 23S ribosomal RNA and is necessary for the in vitro assembly process of the 50S ribosomal subunit. It is not involved in the protein synthesizing functions of that subunit. The polypeptide is Large ribosomal subunit protein bL20 (Thermus thermophilus (strain ATCC BAA-163 / DSM 7039 / HB27)).